The following is a 135-amino-acid chain: IYYVLNSSPRYEPIYYQHRLAVLINNQHMPYQYYARPAAVRPHVQIPQWQVLPNIYPSTVVRHPRPHPSFIAIPPKXLQEKTVIPKINTIATVEPTPIPTPEPTVNNAVIPDASSEFIIASTPETTTVPVTSPVV.

Thr96 carries an O-linked (GalNAc...) threonine glycan. Ser114 carries the phosphoserine; alternate modification. O-linked (GalNAc...) serine; alternate glycosylation occurs at Ser114. The O-linked (GalNAc...) threonine glycan is linked to Thr131. Position 132 is a phosphoserine (Ser132).

This sequence belongs to the kappa-casein family. In terms of tissue distribution, mammary gland specific. Secreted in milk.

Its subcellular location is the secreted. Functionally, kappa-casein stabilizes micelle formation, preventing casein precipitation in milk. The polypeptide is Kappa-casein (CSN3) (Equus grevyi (Grevy's zebra)).